Consider the following 230-residue polypeptide: Thioredoxin domain-containing protein PLP3B (230 aa).

Residues 89–173 enclose the Thioredoxin domain; that stretch reads VSEGDFLGEV…GIAMDRLVGF (85 aa). The tract at residues 199–230 is disordered; sequence EKRKEEDEEDYEYQESIRRSVRSSANVDSDSD. Residues 220-230 are compositionally biased toward polar residues; it reads RSSANVDSDSD.

This sequence belongs to the phosducin family. In terms of assembly, interacts with TUBB2, TUBB3, TUBB4 and TUBB5. Expressed in roots, cotyledons, leaves, stems and flowers.

The protein resides in the cytoplasm. Its subcellular location is the nucleus. Its function is as follows. Tubulin-binding protein involved in microtubule formation. This chain is Thioredoxin domain-containing protein PLP3B (PLP3B), found in Arabidopsis thaliana (Mouse-ear cress).